Here is a 545-residue protein sequence, read N- to C-terminus: MESYKPVWLKGAVILAINLIDKGYKPVAVGLGERDFYIDVKSDTSITLDEVKKAINENVLANVSIENNQIVYKGNKVSIIEDKVSISTNLNPKYFEILNISTHHPNPNEQYVRIRGVAFETEEQLKDYLSWLEKAEETDHRLIGEKLDLFSFHEEAGSGLVLFHPKGQTIRNELIAFMREINDSMGYQEVYTSHVFKTDIWKISGHYTLYRDKLIVFNMEGDEYGVKPMNCPAHILIYKSKPRTYRDLPIRFSEFGHVYRWEKKGELYGLLRVRGFVQDDGHIFLREDQLREEIKMLISKTVEVWHKFGFKDDDIKPYLSTRPDESIGSDELWEKATNALISALQESGLKFGIKEKEGAFYGPKIDFEIRDSLGRWWQLSTIQVDFNLPERFKLEYIDKDGIKKRPVMVHRAIYGSIDRFVAILLEHFKGKLPTWLSSVQVRVLPITDEVNEYAEKVLNDMRKRRIRAEIDYAGETLSKRIKNAYDQGVPYILIVGKKEASEGTVTVRARGNIEVRNVKFEKFLELLITEIAQRDVEQTTVKALK.

Residues 139-433 form a catalytic region; the sequence is DHRLIGEKLD…LLEHFKGKLP (295 aa). Residues C231, H282, and H410 each contribute to the Zn(2+) site.

This sequence belongs to the class-II aminoacyl-tRNA synthetase family. As to quaternary structure, homodimer. Probably interacts with its editing subunit. The cofactor is Zn(2+).

It localises to the cytoplasm. The enzyme catalyses tRNA(Thr) + L-threonine + ATP = L-threonyl-tRNA(Thr) + AMP + diphosphate + H(+). Its function is as follows. Catalyzes the attachment of threonine to tRNA(Thr) in a two-step reaction: L-threonine is first activated by ATP to form Thr-AMP and then transferred to the acceptor end of tRNA(Thr). Also activates L-serine and transfers it to tRNA(Thr) but cannot deacylate incorrectly charged amino acid; unlike most archaea the editing function is found in a freestanding protein. The polypeptide is Threonine--tRNA ligase catalytic subunit (Saccharolobus islandicus (strain Y.G.57.14 / Yellowstone #1) (Sulfolobus islandicus)).